The sequence spans 206 residues: Small ribosomal subunit protein eS1 (206 aa).

The protein belongs to the eukaryotic ribosomal protein eS1 family.

In Natronomonas pharaonis (strain ATCC 35678 / DSM 2160 / CIP 103997 / JCM 8858 / NBRC 14720 / NCIMB 2260 / Gabara) (Halobacterium pharaonis), this protein is Small ribosomal subunit protein eS1.